A 184-amino-acid chain; its full sequence is Dynactin subunit 6 (184 aa).

Belongs to the dynactin subunits 5/6 family. Dynactin subunit 6 subfamily. As to quaternary structure, subunit of dynactin, a multiprotein complex part of a tripartite complex with dynein and a adapter, such as BICDL1, BICD2 or HOOK3. The dynactin complex is built around ACTR1A/ACTB filament and consists of an actin-related filament composed of a shoulder domain, a pointed end and a barbed end.

It is found in the cytoplasm. Its subcellular location is the cytoskeleton. In terms of biological role, part of the dynactin complex that activates the molecular motor dynein for ultra-processive transport along microtubules. The sequence is that of Dynactin subunit 6 (dctn6) from Nematostella vectensis (Starlet sea anemone).